A 267-amino-acid chain; its full sequence is Strigolactone esterase RMS3 (267 aa).

S96 (nucleophile) is an active-site residue. Residues D218 and H247 contribute to the active site.

It belongs to the AB hydrolase superfamily.

The protein localises to the cytoplasm. The protein resides in the nucleus. Involved in strigolactone signaling pathway. Functions downstream of strigolactone synthesis, as a component of hormone signaling and as an enzyme that participates in the conversion of strigolactones to the bioactive form. Binds and hydrolyzes the synthetic strigolactone analog GR24 and its enantiomers in vitro. Forms a stable covalent complex with the D-ring of strigolactone, which is essential for hormone bioactivity. The D-ring is attached to His-247 of the catalytic triad. The hydrolysis of strigolactone into a covalently linked intermediate molecule is required to trigger strigolactone signaling. This mechanism defines RMS3 as a non-canonical hormone receptor with dual functions to generate and sense the active form of strigolactone. Strigolactones are hormones that inhibit tillering and shoot branching through the MAX-dependent pathway, contribute to the regulation of shoot architectural response to phosphate-limiting conditions and function as rhizosphere signal that stimulates hyphal branching of arbuscular mycorrhizal fungi and trigger seed germination of root parasitic weeds. This chain is Strigolactone esterase RMS3, found in Pisum sativum (Garden pea).